The sequence spans 372 residues: Lectin/endochitinase 1 (372 aa).

The signal sequence occupies residues 1 to 23 (MMMRFLSAVVIMSSAMAVGLVSA). A substrate-binding site is contributed by Q24. Q24 bears the Pyrrolidone carboxylic acid mark. Chitin-binding type-1 domains lie at 24–64 (QRCG…KCWS) and 69–111 (DHRC…RCSS). Intrachain disulfides connect C26/C41, C35/C47, C40/C54, and C58/C62. Residue 42–53 (SIWGWCGDSEPY) coordinates substrate. H70 lines the Zn(2+) pocket. Cystine bridges form between C72/C87, C81/C93, C86/C100, and C105/C109. A Zn(2+)-binding site is contributed by H90. Residues 113–128 (VRGPRVALSGNSTANS) are spacer. N123 carries N-linked (GlcNAc...) asparagine glycosylation. A chitinase region spans residues 129-372 (IGNVVVTEPL…FQRIQMRVAA (244 aa)).

In terms of assembly, monomer and homodimer. Zinc favors dimerization. Active in the monomeric form but probably inactive in the dimeric form. The interaction with glycans on the mammalian TCR and MHC molecules of the T-cell and antigen-presenting cell, respectively, is inhibited by oligomers of GlcNAc. Post-translationally, proteolytically processed to yield a very small protein (8.5 kDa, 86 AA) containing only the two chitin-binding domains. In terms of tissue distribution, rhizomes and inflorescence with immature seeds.

It carries out the reaction Random endo-hydrolysis of N-acetyl-beta-D-glucosaminide (1-&gt;4)-beta-linkages in chitin and chitodextrins.. Functionally, functions both as a chitinase and as a N-acetyl-D-glucosamine binding lectin. Inhibits the growth of several phytopathogenic chitin-containing fungi. Also possesses insecticidal activity and superantigenic properties. The sequence is that of Lectin/endochitinase 1 (UDA1) from Urtica dioica (Great nettle).